A 517-amino-acid polypeptide reads, in one-letter code: MRILLIAVLFLLMPKSNAEIPGCDFFDTVDISKAPRFSNGSYLYEGLLIPAHLTAEYDYKLLADDSKEKVASHVRGCACHLRPCIRFCCPQYQKMQKSKCYGDMSEDELNKHDPFVNVTLSDGSVVRRHFKEDLIVQSDLAKPGCPRMYFLNHELPGNEFTLFENGSLLRHWDKVELSKREYCVQHLSFKDDSIRIAPHFCPLSSEHSRTWKTVAIVISLICIILTISVYLYVEKLRNLHGKCFICYLASLFLGYFFLVLNVWKYSSGFCVTAGFLGYFSVMAAFFWLSVIGIHLRIKFSLASNCLHRLLPENPFRAYNLYAWGIPLIMTAITYTADQVVKNEKLRPRVGVGKNCWIYTGDMTVMIYFYGPMLLLIAFNIIMFVLSAIYIYNIKKNVKGLVHKQQTNQQINDQQMFAIFLRLFILMGLSWSFEILSFLLTKQQAWARALMVADYFNWSQGTIIFVLFILKPSILKLIIAGGRQNLPGSHHNSRSKAARYNSTHTACEGSIADPNAYC.

Positions 1-18 (MRILLIAVLFLLMPKSNA) are cleaved as a signal peptide. Residues 19 to 212 (EIPGCDFFDT…LSSEHSRTWK (194 aa)) lie on the Extracellular side of the membrane. 5 cysteine pairs are disulfide-bonded: cysteine 23–cysteine 77, cysteine 79–cysteine 84, cysteine 88–cysteine 183, cysteine 89–cysteine 100, and cysteine 145–cysteine 201. N-linked (GlcNAc...) asparagine glycosylation occurs at asparagine 39. N-linked (GlcNAc...) asparagine glycosylation is found at asparagine 117 and asparagine 165. A helical membrane pass occupies residues 213 to 233 (TVAIVISLICIILTISVYLYV). Topologically, residues 234–242 (EKLRNLHGK) are cytoplasmic. The helical transmembrane segment at 243–263 (CFICYLASLFLGYFFLVLNVW) threads the bilayer. Residues 264–272 (KYSSGFCVT) are Extracellular-facing. Residues 273-293 (AGFLGYFSVMAAFFWLSVIGI) form a helical membrane-spanning segment. Over 294-319 (HLRIKFSLASNCLHRLLPENPFRAYN) the chain is Cytoplasmic. Residues 320-340 (LYAWGIPLIMTAITYTADQVV) traverse the membrane as a helical segment. Over 341 to 363 (KNEKLRPRVGVGKNCWIYTGDMT) the chain is Extracellular. A helical membrane pass occupies residues 364–384 (VMIYFYGPMLLLIAFNIIMFV). The Cytoplasmic portion of the chain corresponds to 385 to 414 (LSAIYIYNIKKNVKGLVHKQQTNQQINDQQ). Residues 415–435 (MFAIFLRLFILMGLSWSFEIL) form a helical membrane-spanning segment. Residues 436–459 (SFLLTKQQAWARALMVADYFNWSQ) are Extracellular-facing. The N-linked (GlcNAc...) asparagine glycan is linked to asparagine 456. The helical transmembrane segment at 460–480 (GTIIFVLFILKPSILKLIIAG) threads the bilayer. The Cytoplasmic portion of the chain corresponds to 481-517 (GRQNLPGSHHNSRSKAARYNSTHTACEGSIADPNAYC).

The protein belongs to the G-protein coupled receptor 2 family. Mth subfamily.

Its subcellular location is the cell membrane. This is Probable G-protein coupled receptor Mth-like 4 (mthl4) from Drosophila melanogaster (Fruit fly).